The following is a 539-amino-acid chain: MFVALGAQIYRQYFGRRGMAMANNSSVANKVCLIVIDGWGVSEDPYGNAILNAQTPVMDKLCSGNWAQIEAHGLHVGLPEGLMGNSEVGHLNIGAGRVIYQDIVRINLAVKNNKFVTNESLVDACDRAKNGNGRLHLAGLVSDGGVHSHIDHMFALVKAIKELGVPELYLHFYGDGRDTSPNSGVGFLEQTLEFLEKTTGYGKLATVVGRYYAMDRDNRWERINVAYEAMIGGVGETSDEAGVVEVVRKRYAADETDEFLKPIILQGEKGRVQNDDTIIFFDYRADRMREISAAMGMDRYKDCNSKLAHPSNLQVYGMTQYKAEFPFKSLFPPASNKNVLAEWLAEQKVSQFHCAETEKYAHVTFFFNGGLEKQFEGEERCLVPSPKVATYDLQPEMSAAGVADKMIEQLEAGTHPFIMCNFAPPDMVGHTGVYEAAVKACEATDIAIGRIYEATQKHGYSLMVTADHGNAEKMKAPDGGKHTAHTCYRVPLTLSHPGFKFVDPADRHPALCDVAPTVLAIMGLPQPAEMTGVSIVQKI.

2 residues coordinate Mn(2+): Asp37 and Ser86. Ser86 is a catalytic residue. Residues His147, 177–178 (RD), Arg210, Arg216, 284–287 (RADR), and Lys359 contribute to the substrate site. Mn(2+) is bound by residues Asp426, His430, Asp467, His468, and His485.

The protein belongs to the BPG-independent phosphoglycerate mutase family. Requires Mg(2+) as cofactor. It depends on Mn(2+) as a cofactor. As to expression, expressed ubiquitously. High expression levels in the nerve ring region, intestine and body wall muscles.

The catalysed reaction is (2R)-2-phosphoglycerate = (2R)-3-phosphoglycerate. It participates in carbohydrate degradation; glycolysis; pyruvate from D-glyceraldehyde 3-phosphate: step 3/5. Its activity is regulated as follows. Activity is not affected by 2,3-bisphosphoglycerate. Its function is as follows. Catalyzes the interconversion of 2-phosphoglycerate and 3-phosphoglycerate. The chain is 2,3-bisphosphoglycerate-independent phosphoglycerate mutase from Caenorhabditis elegans.